We begin with the raw amino-acid sequence, 474 residues long: ATP synthase subunit beta (474 aa).

158–165 is a binding site for ATP; it reads GGAGVGKT.

The protein belongs to the ATPase alpha/beta chains family. In terms of assembly, F-type ATPases have 2 components, CF(1) - the catalytic core - and CF(0) - the membrane proton channel. CF(1) has five subunits: alpha(3), beta(3), gamma(1), delta(1), epsilon(1). CF(0) has three main subunits: a(1), b(2) and c(9-12). The alpha and beta chains form an alternating ring which encloses part of the gamma chain. CF(1) is attached to CF(0) by a central stalk formed by the gamma and epsilon chains, while a peripheral stalk is formed by the delta and b chains.

The protein localises to the cell membrane. The enzyme catalyses ATP + H2O + 4 H(+)(in) = ADP + phosphate + 5 H(+)(out). Produces ATP from ADP in the presence of a proton gradient across the membrane. The catalytic sites are hosted primarily by the beta subunits. This chain is ATP synthase subunit beta, found in Tropheryma whipplei (strain Twist) (Whipple's bacillus).